The sequence spans 377 residues: Cyclin-I (377 aa).

The interval 357–377 (DLSRQEGHASPCPPLQPVSVM) is disordered. A compositionally biased stretch (pro residues) spans 367–377 (PCPPLQPVSVM).

Belongs to the cyclin family. As to expression, highest levels in adult heart, brain and skeletal muscle. Lower levels in adult placenta, lung, kidney and pancreas. Also high levels in fetal brain and lower levels in fetal lung, liver and kidney. Also abundant in testis and thyroid.

The protein resides in the nucleus membrane. The polypeptide is Cyclin-I (Homo sapiens (Human)).